Consider the following 305-residue polypeptide: Tyrosine recombinase XerC (305 aa).

Residues 4–95 form the Core-binding (CB) domain; it reads TSIQALINKW…AVKNFYRFLE (92 aa). The 183-residue stretch at 116 to 298 folds into the Tyr recombinase domain; the sequence is LLPKALSEDD…SIKHLEAVYT (183 aa). Residues arginine 159, lysine 182, histidine 250, arginine 253, and histidine 276 contribute to the active site. The O-(3'-phospho-DNA)-tyrosine intermediate role is filled by tyrosine 285.

The protein belongs to the 'phage' integrase family. XerC subfamily. In terms of assembly, forms a cyclic heterotetrameric complex composed of two molecules of XerC and two molecules of XerD.

The protein resides in the cytoplasm. Site-specific tyrosine recombinase, which acts by catalyzing the cutting and rejoining of the recombining DNA molecules. The XerC-XerD complex is essential to convert dimers of the bacterial chromosome into monomers to permit their segregation at cell division. It also contributes to the segregational stability of plasmids. This chain is Tyrosine recombinase XerC, found in Rickettsia conorii (strain ATCC VR-613 / Malish 7).